The sequence spans 263 residues: 5'-nucleotidase SurE (263 aa).

A divalent metal cation contacts are provided by Asp-10, Asp-11, Ser-41, and Asn-95.

Belongs to the SurE nucleotidase family. Requires a divalent metal cation as cofactor.

Its subcellular location is the cytoplasm. It catalyses the reaction a ribonucleoside 5'-phosphate + H2O = a ribonucleoside + phosphate. Its function is as follows. Nucleotidase that shows phosphatase activity on nucleoside 5'-monophosphates. The sequence is that of 5'-nucleotidase SurE from Methanoculleus marisnigri (strain ATCC 35101 / DSM 1498 / JR1).